A 270-amino-acid chain; its full sequence is Malonyl-[acyl-carrier protein] O-methyltransferase (270 aa).

The protein belongs to the methyltransferase superfamily.

The enzyme catalyses malonyl-[ACP] + S-adenosyl-L-methionine = malonyl-[ACP] methyl ester + S-adenosyl-L-homocysteine. It functions in the pathway cofactor biosynthesis; biotin biosynthesis. Converts the free carboxyl group of a malonyl-thioester to its methyl ester by transfer of a methyl group from S-adenosyl-L-methionine (SAM). It allows to synthesize pimeloyl-ACP via the fatty acid synthetic pathway. This Magnetococcus marinus (strain ATCC BAA-1437 / JCM 17883 / MC-1) protein is Malonyl-[acyl-carrier protein] O-methyltransferase.